A 97-amino-acid polypeptide reads, in one-letter code: Co-chaperonin GroES (97 aa).

The protein belongs to the GroES chaperonin family. Heptamer of 7 subunits arranged in a ring. Interacts with the chaperonin GroEL.

The protein localises to the cytoplasm. Functionally, together with the chaperonin GroEL, plays an essential role in assisting protein folding. The GroEL-GroES system forms a nano-cage that allows encapsulation of the non-native substrate proteins and provides a physical environment optimized to promote and accelerate protein folding. GroES binds to the apical surface of the GroEL ring, thereby capping the opening of the GroEL channel. This is Co-chaperonin GroES from Buchnera aphidicola subsp. Cinara cedri (strain Cc).